Here is a 296-residue protein sequence, read N- to C-terminus: LysM and putative peptidoglycan-binding domain-containing protein 4 (296 aa).

The Extracellular segment spans residues 1-217; sequence MRHKELLSKT…PMDGADCGIQ (217 aa). An N-linked (GlcNAc...) asparagine glycan is attached at asparagine 30. The region spanning 74–118 is the LysM domain; the sequence is LQRELAQEDSLNKLALQYGCKVADIKKVNNFIREQDLYALKSIKS. A helical transmembrane segment spans residues 218–238; the sequence is WWNAVFIMLLIGIVLPIFYLV. The Cytoplasmic segment spans residues 239–296; the sequence is YFKIQASGETPNSLNTAAIPNGSMAMGTVPGQAPRLAVAVPTVPSADSQFSQTTQAGN.

It is found in the membrane. The chain is LysM and putative peptidoglycan-binding domain-containing protein 4 (LYSMD4) from Pongo abelii (Sumatran orangutan).